A 469-amino-acid chain; its full sequence is 3-isopropylmalate dehydratase large subunit (469 aa).

The [4Fe-4S] cluster site is built by cysteine 350, cysteine 410, and cysteine 413.

It belongs to the aconitase/IPM isomerase family. LeuC type 1 subfamily. In terms of assembly, heterodimer of LeuC and LeuD. It depends on [4Fe-4S] cluster as a cofactor.

It catalyses the reaction (2R,3S)-3-isopropylmalate = (2S)-2-isopropylmalate. Its pathway is amino-acid biosynthesis; L-leucine biosynthesis; L-leucine from 3-methyl-2-oxobutanoate: step 2/4. Its function is as follows. Catalyzes the isomerization between 2-isopropylmalate and 3-isopropylmalate, via the formation of 2-isopropylmaleate. This is 3-isopropylmalate dehydratase large subunit from Rhizobium etli (strain ATCC 51251 / DSM 11541 / JCM 21823 / NBRC 15573 / CFN 42).